We begin with the raw amino-acid sequence, 432 residues long: Adenylosuccinate synthetase (432 aa).

GTP is bound by residues 13 to 19 (GDEGKGK) and 41 to 43 (GHT). The Proton acceptor role is filled by aspartate 14. Mg(2+) contacts are provided by aspartate 14 and glycine 41. Residues 14-17 (DEGK), 39-42 (NAGH), threonine 131, arginine 145, glutamine 226, threonine 241, and arginine 305 each bind IMP. Residue histidine 42 is the Proton donor of the active site. Position 301–307 (301–307 (SVTGRAR)) interacts with substrate. GTP contacts are provided by residues arginine 307, 333–335 (KLD), and 416–418 (STG).

It belongs to the adenylosuccinate synthetase family. As to quaternary structure, homodimer. Mg(2+) is required as a cofactor.

Its subcellular location is the cytoplasm. The enzyme catalyses IMP + L-aspartate + GTP = N(6)-(1,2-dicarboxyethyl)-AMP + GDP + phosphate + 2 H(+). The protein operates within purine metabolism; AMP biosynthesis via de novo pathway; AMP from IMP: step 1/2. Plays an important role in the de novo pathway of purine nucleotide biosynthesis. Catalyzes the first committed step in the biosynthesis of AMP from IMP. The chain is Adenylosuccinate synthetase from Neisseria meningitidis serogroup B (strain ATCC BAA-335 / MC58).